Here is a 122-residue protein sequence, read N- to C-terminus: Large ribosomal subunit protein uL14 (122 aa).

The protein belongs to the universal ribosomal protein uL14 family. Part of the 50S ribosomal subunit. Forms a cluster with proteins L3 and L19. In the 70S ribosome, L14 and L19 interact and together make contacts with the 16S rRNA in bridges B5 and B8.

Binds to 23S rRNA. Forms part of two intersubunit bridges in the 70S ribosome. The protein is Large ribosomal subunit protein uL14 of Listeria monocytogenes serotype 4b (strain CLIP80459).